We begin with the raw amino-acid sequence, 392 residues long: L-rhamnonate dehydratase (392 aa).

Substrate contacts are provided by histidine 22 and arginine 48. Mg(2+) is bound by residues aspartate 214, glutamate 240, and glutamate 268. The active-site Proton acceptor is the histidine 318. Substrate is bound at residue glutamate 338.

This sequence belongs to the mandelate racemase/muconate lactonizing enzyme family. RhamD subfamily. Homooctamer; tetramer of dimers. Requires Mg(2+) as cofactor.

The catalysed reaction is L-rhamnonate = 2-dehydro-3-deoxy-L-rhamnonate + H2O. Catalyzes the dehydration of L-rhamnonate to 2-keto-3-deoxy-L-rhamnonate (KDR). This is L-rhamnonate dehydratase from Burkholderia ambifaria (strain ATCC BAA-244 / DSM 16087 / CCUG 44356 / LMG 19182 / AMMD) (Burkholderia cepacia (strain AMMD)).